We begin with the raw amino-acid sequence, 202 residues long: Small ribosomal subunit protein uS4 (202 aa).

Positions 18–44 are disordered; sequence LPGLTRKSARREYPPGQHGQGRRKRSE. The S4 RNA-binding domain occupies 90–152; the sequence is MRLDNTVFRL…DRSRKLIEAN (63 aa).

This sequence belongs to the universal ribosomal protein uS4 family. As to quaternary structure, part of the 30S ribosomal subunit. Contacts protein S5. The interaction surface between S4 and S5 is involved in control of translational fidelity.

Functionally, one of the primary rRNA binding proteins, it binds directly to 16S rRNA where it nucleates assembly of the body of the 30S subunit. In terms of biological role, with S5 and S12 plays an important role in translational accuracy. This is Small ribosomal subunit protein uS4 from Picosynechococcus sp. (strain ATCC 27264 / PCC 7002 / PR-6) (Agmenellum quadruplicatum).